The following is a 404-amino-acid chain: Inosine-5'-monophosphate dehydrogenase (404 aa).

NAD(+) is bound by residues Asp-172 and Gly-222–Gly-224. The K(+) site is built by Gly-224 and Gly-226. Residue Ser-227 participates in IMP binding. Residue Cys-229 participates in K(+) binding. Cys-229 serves as the catalytic Thioimidate intermediate. Residues Asp-262–Gly-264, Gly-285–Asn-286, and Tyr-309–Gly-313 contribute to the IMP site. Catalysis depends on Arg-325, which acts as the Proton acceptor. Position 340 (Glu-340) interacts with IMP. Positions 394, 395, and 396 each coordinate K(+).

This sequence belongs to the IMPDH/GMPR family. As to quaternary structure, homotetramer. It depends on K(+) as a cofactor.

The enzyme catalyses IMP + NAD(+) + H2O = XMP + NADH + H(+). It participates in purine metabolism; XMP biosynthesis via de novo pathway; XMP from IMP: step 1/1. Its activity is regulated as follows. Mycophenolic acid (MPA) is a non-competitive inhibitor that prevents formation of the closed enzyme conformation by binding to the same site as the amobile flap. In contrast, mizoribine monophosphate (MZP) is a competitive inhibitor that induces the closed conformation. MPA is a potent inhibitor of mammalian IMPDHs but a poor inhibitor of the bacterial enzymes. MZP is a more potent inhibitor of bacterial IMPDH. Catalyzes the conversion of inosine 5'-phosphate (IMP) to xanthosine 5'-phosphate (XMP), the first committed and rate-limiting step in the de novo synthesis of guanine nucleotides, and therefore plays an important role in the regulation of cell growth. Essential for mouse infection by tick bite and critical for the survival in environments that appear to lack sufficient amounts of guanine, guanosine, and/or deoxyguanosine to support spirochete growth, such as mammalian host tissues. This chain is Inosine-5'-monophosphate dehydrogenase, found in Borreliella burgdorferi (strain ATCC 35210 / DSM 4680 / CIP 102532 / B31) (Borrelia burgdorferi).